A 277-amino-acid polypeptide reads, in one-letter code: Phosphoenolpyruvate synthase regulatory protein (277 aa).

157-164 contributes to the ADP binding site; it reads GVSRCGKT.

The protein belongs to the pyruvate, phosphate/water dikinase regulatory protein family. PSRP subfamily.

The catalysed reaction is [pyruvate, water dikinase] + ADP = [pyruvate, water dikinase]-phosphate + AMP + H(+). The enzyme catalyses [pyruvate, water dikinase]-phosphate + phosphate + H(+) = [pyruvate, water dikinase] + diphosphate. Functionally, bifunctional serine/threonine kinase and phosphorylase involved in the regulation of the phosphoenolpyruvate synthase (PEPS) by catalyzing its phosphorylation/dephosphorylation. This Salmonella gallinarum (strain 287/91 / NCTC 13346) protein is Phosphoenolpyruvate synthase regulatory protein.